Here is a 391-residue protein sequence, read N- to C-terminus: tRNA-specific 2-thiouridylase MnmA (391 aa).

ATP is bound by residues 9 to 16 (GMSGGVDS) and M35. The segment at 95-97 (NPD) is interaction with target base in tRNA. Residue C100 is the Nucleophile of the active site. A disulfide bridge connects residues C100 and C196. G124 serves as a coordination point for ATP. The tract at residues 146–148 (KDQ) is interaction with tRNA. The active-site Cysteine persulfide intermediate is C196. An interaction with tRNA region spans residues 308–309 (RY). Polar residues predominate over residues 372–382 (TGQPGQATSTG). A disordered region spans residues 372 to 391 (TGQPGQATSTGHAPALAEAR).

The protein belongs to the MnmA/TRMU family.

The protein resides in the cytoplasm. The enzyme catalyses S-sulfanyl-L-cysteinyl-[protein] + uridine(34) in tRNA + AH2 + ATP = 2-thiouridine(34) in tRNA + L-cysteinyl-[protein] + A + AMP + diphosphate + H(+). In terms of biological role, catalyzes the 2-thiolation of uridine at the wobble position (U34) of tRNA, leading to the formation of s(2)U34. The chain is tRNA-specific 2-thiouridylase MnmA from Burkholderia cenocepacia (strain ATCC BAA-245 / DSM 16553 / LMG 16656 / NCTC 13227 / J2315 / CF5610) (Burkholderia cepacia (strain J2315)).